Here is a 97-residue protein sequence, read N- to C-terminus: YcgL domain-containing protein PMI1171 (97 aa).

Residues methionine 3 to leucine 87 form the YcgL domain.

In Proteus mirabilis (strain HI4320), this protein is YcgL domain-containing protein PMI1171.